The primary structure comprises 495 residues: Lysine--tRNA ligase (495 aa).

Residues E406 and E413 each contribute to the Mg(2+) site.

Belongs to the class-II aminoacyl-tRNA synthetase family. In terms of assembly, homodimer. Mg(2+) is required as a cofactor.

It localises to the cytoplasm. The catalysed reaction is tRNA(Lys) + L-lysine + ATP = L-lysyl-tRNA(Lys) + AMP + diphosphate. The polypeptide is Lysine--tRNA ligase (Staphylococcus epidermidis (strain ATCC 35984 / DSM 28319 / BCRC 17069 / CCUG 31568 / BM 3577 / RP62A)).